A 418-amino-acid polypeptide reads, in one-letter code: Lariat debranching enzyme (418 aa).

The a divalent metal cation site is built by cysteine 8, histidine 10, aspartate 39, and asparagine 84. The tract at residues 124–154 (SGIYNERHYRSGHFERPPYNESTIRSVYHVR) is lariat recognition loop. Positions 174, 226, and 228 each coordinate a divalent metal cation. A disordered region spans residues 372-418 (GERTDIPASLAPSDLPTYDSEEIPIDDIDEIEEMEEAKADDHTRDDA). A compositionally biased stretch (acidic residues) spans 390-406 (DSEEIPIDDIDEIEEME). Basic and acidic residues predominate over residues 407–418 (EAKADDHTRDDA).

It belongs to the lariat debranching enzyme family. Fe(2+) is required as a cofactor. The cofactor is Zn(2+). Mn(2+) serves as cofactor. In terms of tissue distribution, widely expressed. Expressed in roots, stems, cauline and rosette leaves, flower buds and siliques.

It is found in the nucleus. Active in presence of diverse metals including Fe(2+), Zn(2+), Mn(2+). Binds two metal cations in two adjacent alpha and beta metal-binding pockets. Functionally, cleaves the 2'-5' phosphodiester linkage at the branch point of lariat intron pre-mRNAs after splicing and converts them into linear molecules that are subsequently degraded. It thereby facilitates ribonucleotide turnover. It may also participate in retrovirus replication via an RNA lariat intermediate in cDNA synthesis. Plays en essential role during embryogenesis. The sequence is that of Lariat debranching enzyme (DBR1) from Arabidopsis thaliana (Mouse-ear cress).